The chain runs to 29 residues: Cyclotide psyleio D (29 aa).

Residues 1–29 (GLPVCGESCFGGTCNTPGCSCTWPVCTRD) constitute a cross-link (cyclopeptide (Gly-Asp)). Cystine bridges form between Cys5/Cys19, Cys9/Cys21, and Cys14/Cys26.

This is a cyclic peptide.

Functionally, probably participates in a plant defense mechanism. The sequence is that of Cyclotide psyleio D from Psychotria brachyceras.